A 241-amino-acid chain; its full sequence is Protein GrpE (241 aa).

Residues 28–49 are compositionally biased toward basic and acidic residues; sequence QNCQKEETQTTNKDNQKEDETF. Positions 28–78 are disordered; sequence QNCQKEETQTTNKDNQKEDETFKNQPNKTKQTNTKQQKHLSKESSHQQITK. Over residues 50–62 the composition is skewed to low complexity; sequence KNQPNKTKQTNTK.

Belongs to the GrpE family. As to quaternary structure, homodimer.

It is found in the cytoplasm. Functionally, participates actively in the response to hyperosmotic and heat shock by preventing the aggregation of stress-denatured proteins, in association with DnaK and GrpE. It is the nucleotide exchange factor for DnaK and may function as a thermosensor. Unfolded proteins bind initially to DnaJ; upon interaction with the DnaJ-bound protein, DnaK hydrolyzes its bound ATP, resulting in the formation of a stable complex. GrpE releases ADP from DnaK; ATP binding to DnaK triggers the release of the substrate protein, thus completing the reaction cycle. Several rounds of ATP-dependent interactions between DnaJ, DnaK and GrpE are required for fully efficient folding. In Aster yellows witches'-broom phytoplasma (strain AYWB), this protein is Protein GrpE.